Here is a 272-residue protein sequence, read N- to C-terminus: Tryptophan synthase alpha chain (272 aa).

Residues Glu49 and Asp60 each act as proton acceptor in the active site.

Belongs to the TrpA family. In terms of assembly, tetramer of two alpha and two beta chains.

It carries out the reaction (1S,2R)-1-C-(indol-3-yl)glycerol 3-phosphate + L-serine = D-glyceraldehyde 3-phosphate + L-tryptophan + H2O. It participates in amino-acid biosynthesis; L-tryptophan biosynthesis; L-tryptophan from chorismate: step 5/5. In terms of biological role, the alpha subunit is responsible for the aldol cleavage of indoleglycerol phosphate to indole and glyceraldehyde 3-phosphate. This Polaromonas sp. (strain JS666 / ATCC BAA-500) protein is Tryptophan synthase alpha chain.